The following is a 1159-amino-acid chain: WASH complex subunit 5 (1159 aa).

Serine 917 carries the post-translational modification Phosphoserine.

This sequence belongs to the strumpellin family. Component of the WASH core complex also described as WASH regulatory complex (SHRC) composed of WASH (WASHC1, WASH2P or WASH3P), WASHC2 (WASHC2A or WASHC2C), WASHC3, WASHC4 and WASHC5. The WASH core complex associates via WASHC2 with the F-actin-capping protein dimer (formed by CAPZA1, CAPZA2 or CAPZA3 and CAPZB) in a transient or substoichiometric manner which was initially described as WASH complex. Interacts with VCP, PI4K2A.

Its subcellular location is the cytoplasm. It is found in the cytosol. The protein localises to the endoplasmic reticulum. The protein resides in the early endosome. Acts as a component of the WASH core complex that functions as a nucleation-promoting factor (NPF) at the surface of endosomes, where it recruits and activates the Arp2/3 complex to induce actin polymerization, playing a key role in the fission of tubules that serve as transport intermediates during endosome sorting. May be involved in axonal outgrowth. Involved in cellular localization of ADRB2. Involved in cellular trafficking of BLOC-1 complex cargos such as ATP7A and VAMP7. The protein is WASH complex subunit 5 of Pongo abelii (Sumatran orangutan).